A 351-amino-acid chain; its full sequence is Secreted frizzled-related sequence protein 4 (351 aa).

Residues 1–18 (MLRSILVALCLWLRLALG) form the signal peptide. One can recognise an FZ domain in the interval 19 to 139 (VRGAPCEAVR…VYDRGVCISP (121 aa)). 5 cysteine pairs are disulfide-bonded: C24–C85, C32–C78, C69–C108, C97–C136, and C101–C125. Residues N38 and N68 are each glycosylated (N-linked (GlcNAc...) asparagine). N-linked (GlcNAc...) asparagine glycosylation is found at N116, N194, and N240. Residues 178–306 (CKCKKVKPTL…TIQDKKQIAS (129 aa)) enclose the NTR domain. Over residues 293–303 (EQQRTIQDKKQ) the composition is skewed to basic and acidic residues. The interval 293 to 351 (EQQRTIQDKKQIASRTSRTSRSNPPKSKGRPPAPKPASPKKNIKARSAPKKSNLKKSAS) is disordered. Over residues 306-318 (SRTSRTSRSNPPK) the composition is skewed to low complexity. Over residues 333–351 (KNIKARSAPKKSNLKKSAS) the composition is skewed to basic residues.

Belongs to the secreted frizzled-related protein (sFRP) family. As to expression, expressed in the ovary. Localized to granulosa cells of periovulatory follicles and corpora lutea. Weakly expressed in adult tissues including kidney, brain and lung.

It localises to the secreted. In terms of biological role, soluble frizzled-related proteins (sFRPS) function as modulators of Wnt signaling through direct interaction with Wnts. They have a role in regulating cell growth and differentiation in specific cell types. SFRP4 plays a role in bone morphogenesis. May also act as a regulator of adult uterine morphology and function. May also increase apoptosis during ovulation possibly through modulation of FZ1/FZ4/WNT4 signaling. Has phosphaturic effects by specifically inhibiting sodium-dependent phosphate uptake. This is Secreted frizzled-related sequence protein 4 (Sfrp4) from Mus musculus (Mouse).